The sequence spans 318 residues: uncharacterized protein (318 aa).

Residues 2 to 22 (ILELIIVLVLLVLAFKSLKIL) traverse the membrane as a helical segment. The segment at 295-318 (SDPEDKGVSEVETESQPAEKPEKH) is disordered.

This sequence belongs to the band 7/mec-2 family.

It localises to the membrane. This is an uncharacterized protein from Methanothermobacter thermautotrophicus (strain ATCC 29096 / DSM 1053 / JCM 10044 / NBRC 100330 / Delta H) (Methanobacterium thermoautotrophicum).